Reading from the N-terminus, the 216-residue chain is Large ribosomal subunit protein bL25 (216 aa).

Residues 191–216 (LVSAESEEDEDAPAADEVPATEVSEE) form a disordered region. Over residues 195-204 (ESEEDEDAPA) the composition is skewed to acidic residues.

This sequence belongs to the bacterial ribosomal protein bL25 family. CTC subfamily. As to quaternary structure, part of the 50S ribosomal subunit; part of the 5S rRNA/L5/L18/L25 subcomplex. Contacts the 5S rRNA. Binds to the 5S rRNA independently of L5 and L18.

This is one of the proteins that binds to the 5S RNA in the ribosome where it forms part of the central protuberance. In Jannaschia sp. (strain CCS1), this protein is Large ribosomal subunit protein bL25.